A 45-amino-acid polypeptide reads, in one-letter code: Cytochrome b559 subunit beta (45 aa).

A helical membrane pass occupies residues 20-36; the sequence is WLALHTLGVPTVFFLGA. His-24 contacts heme.

The protein belongs to the PsbE/PsbF family. As to quaternary structure, heterodimer of an alpha subunit and a beta subunit. PSII is composed of 1 copy each of membrane proteins PsbA, PsbB, PsbC, PsbD, PsbE, PsbF, PsbH, PsbI, PsbJ, PsbK, PsbL, PsbM, PsbT, PsbX, PsbY, PsbZ, Psb30/Ycf12, peripheral proteins PsbO, CyanoQ (PsbQ), PsbU, PsbV and a large number of cofactors. It forms dimeric complexes. It depends on heme b as a cofactor.

It is found in the cellular thylakoid membrane. This b-type cytochrome is tightly associated with the reaction center of photosystem II (PSII). PSII is a light-driven water:plastoquinone oxidoreductase that uses light energy to abstract electrons from H(2)O, generating O(2) and a proton gradient subsequently used for ATP formation. It consists of a core antenna complex that captures photons, and an electron transfer chain that converts photonic excitation into a charge separation. The polypeptide is Cytochrome b559 subunit beta (Parasynechococcus marenigrum (strain WH8102)).